Reading from the N-terminus, the 563-residue chain is Arginine--tRNA ligase (563 aa).

Positions 121-131 (PNIAKPFSIGH) match the 'HIGH' region motif.

Belongs to the class-I aminoacyl-tRNA synthetase family. In terms of assembly, monomer.

It localises to the cytoplasm. It catalyses the reaction tRNA(Arg) + L-arginine + ATP = L-arginyl-tRNA(Arg) + AMP + diphosphate. The polypeptide is Arginine--tRNA ligase (Streptococcus pneumoniae (strain Hungary19A-6)).